Reading from the N-terminus, the 338-residue chain is MGLKINRPRRGSMGVYPRKRAADIVPRVRTWPDVNLGKPALLGFAAYKAGMLHAVVVDDRPTSPLYGKEVVKAVTVLDAPPLFVWGFRLYTLDPTNGYLRSAAEVWAGELPKHLSRVLTLPEKVDVDKQMKQVEEYRDVAVEVRALVATQPHLSGIGKKTPELLEIPIGGVPNIDERIKFAISLLGKTVSPKDVFSPGQLVDVIAVTKGKGWQGVVKRFGVTILPRWHKHRKGHRRTGTIGPQAPALMFTQPRPGQMGFHQRTEYNKRLLKIGENGAEITPKSGFPHYGVIKGPYILIQGSLPGARKRLVVLRHPARPPRRAPPTTEPQVVWVSSQQP.

2 disordered regions span residues 230–256 (HRKG…RPGQ) and 315–338 (PARP…SQQP).

This sequence belongs to the universal ribosomal protein uL3 family. In terms of assembly, part of the 50S ribosomal subunit. Forms a cluster with proteins L14 and L24e.

One of the primary rRNA binding proteins, it binds directly near the 3'-end of the 23S rRNA, where it nucleates assembly of the 50S subunit. This chain is Large ribosomal subunit protein uL3, found in Pyrobaculum arsenaticum (strain DSM 13514 / JCM 11321 / PZ6).